Reading from the N-terminus, the 113-residue chain is Protein FMC1 homolog (113 aa).

Residues 94–113 (SAGLVGLQLPHQPGGKGWEP) are disordered.

The protein belongs to the FMC1 family. As to quaternary structure, interacts with ATPAF2.

It localises to the mitochondrion. Its function is as follows. Plays a role in the assembly/stability of the mitochondrial membrane ATP synthase (F(1)F(0) ATP synthase or Complex V). The sequence is that of Protein FMC1 homolog from Rattus norvegicus (Rat).